Consider the following 211-residue polypeptide: Imidazole glycerol phosphate synthase subunit HisH (211 aa).

In terms of domain architecture, Glutamine amidotransferase type-1 spans 5–211 (SVALLDYGSG…QLLRNWVDSL (207 aa)). C83 (nucleophile) is an active-site residue. Residues H192 and E194 contribute to the active site.

Heterodimer of HisH and HisF.

Its subcellular location is the cytoplasm. It catalyses the reaction 5-[(5-phospho-1-deoxy-D-ribulos-1-ylimino)methylamino]-1-(5-phospho-beta-D-ribosyl)imidazole-4-carboxamide + L-glutamine = D-erythro-1-(imidazol-4-yl)glycerol 3-phosphate + 5-amino-1-(5-phospho-beta-D-ribosyl)imidazole-4-carboxamide + L-glutamate + H(+). It carries out the reaction L-glutamine + H2O = L-glutamate + NH4(+). It functions in the pathway amino-acid biosynthesis; L-histidine biosynthesis; L-histidine from 5-phospho-alpha-D-ribose 1-diphosphate: step 5/9. Functionally, IGPS catalyzes the conversion of PRFAR and glutamine to IGP, AICAR and glutamate. The HisH subunit catalyzes the hydrolysis of glutamine to glutamate and ammonia as part of the synthesis of IGP and AICAR. The resulting ammonia molecule is channeled to the active site of HisF. This is Imidazole glycerol phosphate synthase subunit HisH from Nocardia farcinica (strain IFM 10152).